A 346-amino-acid chain; its full sequence is Probable RNA methyltransferase PA1839 (346 aa).

The Proton acceptor role is filled by glutamate 91. Residues 94–320 form the Radical SAM core domain; sequence LLPRGGLCVS…TKVRNSAGQD (227 aa). Cysteine 101 and cysteine 325 are joined by a disulfide. Residues cysteine 108, cysteine 112, and cysteine 115 each coordinate [4Fe-4S] cluster. S-adenosyl-L-methionine is bound by residues 153–154, serine 183, 206–208, and asparagine 282; these read GE and SLH. Cysteine 325 (S-methylcysteine intermediate) is an active-site residue.

Belongs to the radical SAM superfamily. RlmN family. [4Fe-4S] cluster is required as a cofactor.

The protein localises to the cytoplasm. This chain is Probable RNA methyltransferase PA1839, found in Pseudomonas aeruginosa (strain ATCC 15692 / DSM 22644 / CIP 104116 / JCM 14847 / LMG 12228 / 1C / PRS 101 / PAO1).